The sequence spans 283 residues: Phospholipase C (283 aa).

Residues 1 to 24 form the signal peptide; it reads MKKKVLALGAAITLVAPLQSVAFA. A propeptide spanning residues 25 to 38 is cleaved from the precursor; the sequence is HENDGGQRFGVIPR. Trp-39, His-52, Asp-93, His-107, His-156, Asp-160, His-166, His-180, and Glu-184 together coordinate Zn(2+). One can recognise a Zn-dependent PLC domain in the interval 39-283; it reads WSAEDKHKEG…QLWFDTYGNR (245 aa).

This sequence belongs to the bacterial zinc-metallophospholipase C family. As to quaternary structure, monomer. Zn(2+) is required as a cofactor.

The catalysed reaction is a 1,2-diacyl-sn-glycero-3-phosphocholine + H2O = phosphocholine + a 1,2-diacyl-sn-glycerol + H(+). In terms of biological role, required, with sphingomyelinase, to effect target cell lysis (hemolysis). The chain is Phospholipase C (cerA) from Bacillus cereus.